The sequence spans 97 residues: Large ribosomal subunit protein uL23 (97 aa).

This sequence belongs to the universal ribosomal protein uL23 family. In terms of assembly, part of the 50S ribosomal subunit. Contacts protein L29, and trigger factor when it is bound to the ribosome.

In terms of biological role, one of the early assembly proteins it binds 23S rRNA. One of the proteins that surrounds the polypeptide exit tunnel on the outside of the ribosome. Forms the main docking site for trigger factor binding to the ribosome. This is Large ribosomal subunit protein uL23 from Myxococcus xanthus (strain DK1622).